The chain runs to 273 residues: Eukaryotic translation initiation factor 3 subunit G-2 (273 aa).

Residues 165–193 (KYVPPFMKDGGGGPGGKNWGRGRERDDSS) form a disordered region. Over residues 173 to 183 (DGGGGPGGKNW) the composition is skewed to gly residues. Residues 193–271 (SAVRISNLSE…LILCVEWSKP (79 aa)) enclose the RRM domain.

The protein belongs to the eIF-3 subunit G family. In terms of assembly, component of the eukaryotic translation initiation factor 3 (eIF-3) complex. The eIF-3 complex interacts with pix.

It is found in the cytoplasm. Functionally, RNA-binding component of the eukaryotic translation initiation factor 3 (eIF-3) complex, which is involved in protein synthesis of a specialized repertoire of mRNAs and, together with other initiation factors, stimulates binding of mRNA and methionyl-tRNAi to the 40S ribosome. The eIF-3 complex specifically targets and initiates translation of a subset of mRNAs involved in cell proliferation. This subunit can bind 18S rRNA. This is Eukaryotic translation initiation factor 3 subunit G-2 from Drosophila yakuba (Fruit fly).